A 188-amino-acid polypeptide reads, in one-letter code: Pallidipin (188 aa).

The signal sequence occupies residues 1–18 (MKVIIAATLLGILMHAFA). Disulfide bonds link C21/C137, C55/C184, and C89/C105.

This sequence belongs to the calycin superfamily. Triabin family. In terms of tissue distribution, expressed in salivary glands.

Its subcellular location is the secreted. Its function is as follows. Has been described as a specific inhibitor of collagen-induced platelet aggregation. However, as it does not affect platelet shape change or adhesion, it is plausible that it exerts its antiplatelet activity by a mechanism similar to that of triplatin, moubatin and dipetalodipin as scavenging eicosanoids involved in inflammation such as thromboxane A2 (TXA2). In Meccus pallidipennis (Triatomine bug), this protein is Pallidipin.